The following is a 151-amino-acid chain: Small ribosomal subunit protein uS13 (151 aa).

The protein belongs to the universal ribosomal protein uS13 family. As to quaternary structure, part of the 30S ribosomal subunit. Forms a loose heterodimer with protein S19. Forms two bridges to the 50S subunit in the 70S ribosome.

In terms of biological role, located at the top of the head of the 30S subunit, it contacts several helices of the 16S rRNA. In the 70S ribosome it contacts the 23S rRNA (bridge B1a) and protein L5 of the 50S subunit (bridge B1b), connecting the 2 subunits; these bridges are implicated in subunit movement. The protein is Small ribosomal subunit protein uS13 of Staphylothermus marinus (strain ATCC 43588 / DSM 3639 / JCM 9404 / F1).